Reading from the N-terminus, the 38-residue chain is Large ribosomal subunit protein bL36 (38 aa).

This sequence belongs to the bacterial ribosomal protein bL36 family.

In Acinetobacter baylyi (strain ATCC 33305 / BD413 / ADP1), this protein is Large ribosomal subunit protein bL36.